The sequence spans 436 residues: 3-ketoacyl-CoA thiolase (436 aa).

The active-site Acyl-thioester intermediate is Cys-99. Residues His-392 and Cys-422 each act as proton acceptor in the active site.

The protein belongs to the thiolase-like superfamily. Thiolase family. As to quaternary structure, heterotetramer of two alpha chains (FadJ) and two beta chains (FadI).

The protein resides in the cytoplasm. The enzyme catalyses an acyl-CoA + acetyl-CoA = a 3-oxoacyl-CoA + CoA. It participates in lipid metabolism; fatty acid beta-oxidation. Catalyzes the final step of fatty acid oxidation in which acetyl-CoA is released and the CoA ester of a fatty acid two carbons shorter is formed. This chain is 3-ketoacyl-CoA thiolase, found in Shigella flexneri serotype 5b (strain 8401).